Here is a 137-residue protein sequence, read N- to C-terminus: uncharacterized protein (137 aa).

This is an uncharacterized protein from Schizosaccharomyces pombe (strain 972 / ATCC 24843) (Fission yeast).